The primary structure comprises 342 residues: Mitochondrial fission factor (342 aa).

Residues 1-322 lie on the Cytoplasmic side of the membrane; the sequence is MSKGTSSDTS…ENKERAKREM (322 aa). Thr-115 is modified (phosphothreonine). Ala-146 is modified (phosphoserine). The residue at position 149 (Arg-149) is a Phosphothreonine. Phosphoserine occurs at positions 151, 155, 157, and 172. Position 200 is a phosphothreonine (Thr-200). Phosphoserine is present on residues Ser-202, Ser-229, Ser-233, and Ser-295. The stretch at 291 to 322 forms a coiled coil; it reads VDAASLRRQIIKLNRRLQLLEEENKERAKREM. A helical; Anchor for type IV membrane protein membrane pass occupies residues 323-340; it reads VMYSITVAFWLLNSWLWF. Residues 341 to 342 are Mitochondrial intermembrane-facing; the sequence is RR.

Belongs to the Tango11 family. In terms of assembly, homodimer. Interacts with DNM1L. Interacts with C11orf65/MFI; the interaction inhibits MFF interaction with DNM1L. In terms of tissue distribution, highly expressed in heart, kidney, liver, brain, muscle, and stomach.

Its subcellular location is the mitochondrion outer membrane. It localises to the peroxisome. It is found in the cytoplasmic vesicle. The protein resides in the secretory vesicle. The protein localises to the synaptic vesicle. Its function is as follows. Plays a role in mitochondrial and peroxisomal fission. Promotes the recruitment and association of the fission mediator dynamin-related protein 1 (DNM1L) to the mitochondrial surface. May be involved in regulation of synaptic vesicle membrane dynamics by recruitment of DNM1L to clathrin-containing vesicles. The sequence is that of Mitochondrial fission factor (MFF) from Homo sapiens (Human).